A 242-amino-acid polypeptide reads, in one-letter code: Carboxy-S-adenosyl-L-methionine synthase (242 aa).

Residues Tyr39, 64-66, 89-90, 117-118, Asn132, and Arg199 each bind S-adenosyl-L-methionine; these read GCS, DN, and DI.

This sequence belongs to the class I-like SAM-binding methyltransferase superfamily. Cx-SAM synthase family. Homodimer.

It catalyses the reaction prephenate + S-adenosyl-L-methionine = carboxy-S-adenosyl-L-methionine + 3-phenylpyruvate + H2O. In terms of biological role, catalyzes the conversion of S-adenosyl-L-methionine (SAM) to carboxy-S-adenosyl-L-methionine (Cx-SAM). The chain is Carboxy-S-adenosyl-L-methionine synthase from Aliivibrio fischeri (strain MJ11) (Vibrio fischeri).